Consider the following 183-residue polypeptide: MSLIDQAREQMAKTVENTKENFSGIRTGRANPALLNGITVDYYGAPTPIKAVASIGVPEPRTLSVTPFDASQAGAVEKALRNSDLGVSPNRDGNVIRLTMPELTEERRKEYVKLAKGKAEDGKVAVRNIRRKTKEALDKAVKDGEMGEDEGDRLLKDLDKVTKSVTDEIDALLESKQKEIMEV.

This sequence belongs to the RRF family.

The protein resides in the cytoplasm. Functionally, responsible for the release of ribosomes from messenger RNA at the termination of protein biosynthesis. May increase the efficiency of translation by recycling ribosomes from one round of translation to another. The chain is Ribosome-recycling factor from Bifidobacterium longum subsp. infantis (strain ATCC 15697 / DSM 20088 / JCM 1222 / NCTC 11817 / S12).